A 652-amino-acid chain; its full sequence is RNA-binding KH domain-containing protein RCF3 (652 aa).

The segment covering Met1–Gln14 has biased composition (basic and acidic residues). The disordered stretch occupies residues Met1–Glu63. Over residues Phe34–Gly55 the composition is skewed to gly residues. 2 KH domains span residues Thr67–Leu139 and Arg175–Val245. The tract at residues Gln253 to Tyr307 is disordered. Positions Arg292–Asn306 are enriched in low complexity. 3 consecutive KH domains span residues Glu324–Leu391, Leu408–Leu476, and Arg576–Leu640.

Homodimer. Interacts with CPL1. Interacts with RS40 and RS41. Interacts with DRB1/HYL1 and SE. Interacts with CPL2. As to expression, expressed in roots, cotyledons, leaves, flowers and siliques.

Its subcellular location is the nucleus. It localises to the nucleus speckle. In terms of biological role, acts as a negative regulator of osmotic stress-induced gene expression. Involved in the regulation of thermotolerance responses under heat stress. Functions as an upstream regulator of heat stress transcription factor (HSF) genes. Negatively regulates HSFA1A, HSFA1B and HSFA1D, but positively controls the expression of HSFA1E, HSFA3, HSFA9, HSFB3, and DREB2C. Forms a complex with CPL1 that modulates co-transcriptional processes such as mRNA capping and polyadenylation, and functions to repress stress-inducible gene expression. Regulates pre-mRNA processing under salt stress. Involved in primary miRNA processing and pri-miRNA biogenesis. Binds both intronless and intron-containing pri-miRNAs. Acts as a regulator of biotic stress response gene expression and basal JA-mediated responses involved in defense. Acts as a negative regulator of resistance to the fungal pathogen Fusarium oxysporum. The sequence is that of RNA-binding KH domain-containing protein RCF3 from Arabidopsis thaliana (Mouse-ear cress).